The sequence spans 1354 residues: Tensin homolog (1354 aa).

In terms of domain architecture, Phosphatase tensin-type spans 38–207; the sequence is MKDRKEGVQV…GYFSSLLSGR (170 aa). Cys-144 functions as the Phosphocysteine intermediate in the catalytic mechanism. Residues 212–337 form the C2 tensin-type domain; sequence SDPLYLHNII…VTVELVVSHT (126 aa). Disordered regions lie at residues 380–442, 597–616, 638–660, 692–720, 734–754, 794–879, and 1015–1035; these read EYSE…DVVP, STLQRRPKPPARSGSYRTLN, SNTAPLPPPRRQEQHAGTRSVQL, DVRGGQQQQQEQHNASNDFNFSNTLNNTP, SVTTPRNHHFSTPSREQEADA, AANN…DRQR, and NGERGGSGHAAGGGGGGHNGY. The span at 391–401 shows a compositional bias: polar residues; it reads SSKSANPINNN. Residues 408–417 are compositionally biased toward pro residues; that stretch reads VGPPVPPKPS. Composition is skewed to polar residues over residues 704 to 720, 734 to 747, and 794 to 804; these read HNASNDFNFSNTLNNTP, SVTTPRNHHFSTPS, and AANNDENQHNL. Positions 821–843 are enriched in basic and acidic residues; that stretch reads AEFRREEERLRNTRSPYGEERWR. A compositionally biased stretch (gly residues) spans 1017–1033; the sequence is ERGGSGHAAGGGGGGHN. Residues 1083-1187 form the SH2 domain; that stretch reads WYKPTISREQ…ALPTKLVLPD (105 aa). A PTB domain is found at 1209–1353; it reads ACNVVYVGSV…NKVMLAQKNR (145 aa).

It belongs to the PTEN phosphatase protein family. As to quaternary structure, may interact (via SH2 domain) with receptor svh-2 (when tyrosine-phosphorylated). May interact (via C-terminus) with integrin pat-3. In terms of tissue distribution, expressed in ventral motor neurons, including ventral and dorsal D-type neurons, and in a subset of cells in the head.

The protein localises to the cell projection. It localises to the axon. The catalysed reaction is O-phospho-L-tyrosyl-[protein] + H2O = L-tyrosyl-[protein] + phosphate. In terms of biological role, probable phosphatase which regulates axon regeneration after injury by linking the svh-2 and integrin signaling pathways. Functionally, not involved in axon regeneration after injury. This is Tensin homolog from Caenorhabditis elegans.